A 244-amino-acid polypeptide reads, in one-letter code: Protein A47 (244 aa).

The protein belongs to the orthopoxvirus A47 protein family.

The sequence is that of Protein A47 from Homo sapiens (Human).